Consider the following 236-residue polypeptide: Phosphoribosylaminoimidazole-succinocarboxamide synthase (236 aa).

This sequence belongs to the SAICAR synthetase family.

The enzyme catalyses 5-amino-1-(5-phospho-D-ribosyl)imidazole-4-carboxylate + L-aspartate + ATP = (2S)-2-[5-amino-1-(5-phospho-beta-D-ribosyl)imidazole-4-carboxamido]succinate + ADP + phosphate + 2 H(+). It participates in purine metabolism; IMP biosynthesis via de novo pathway; 5-amino-1-(5-phospho-D-ribosyl)imidazole-4-carboxamide from 5-amino-1-(5-phospho-D-ribosyl)imidazole-4-carboxylate: step 1/2. The polypeptide is Phosphoribosylaminoimidazole-succinocarboxamide synthase (purC) (Lactococcus lactis subsp. cremoris (Streptococcus cremoris)).